Here is a 229-residue protein sequence, read N- to C-terminus: Methyltransferase ctvB (229 aa).

This sequence belongs to the methyltransferase superfamily.

It participates in mycotoxin biosynthesis. In terms of biological role, methyltransferase; part of the gene cluster that mediates the biosynthesis of citreoviridin, an inhibitor of the of F1-ATPase beta-subunit. The HR-PKS ctvA accepts acetyl-CoA as the starter unit and catalyzes eight iterations of malonyl-CoA extension and four iterations of SAM-dependent methylation at C4, C12, C14, and C16. The KR and DH domains selectively act on the first six iterations to generate the hexaene chain. In the last three iterations, the KR and DH domains terminate their functions to yield a beta,delta-diketo ester moiety, which then undergoes intramolecular cyclization to yield an alpha-pyrone intermediate. Subsequently, ctvB methylates the alpha-pyrone hydroxyl group to generate citreomontanin. In order to form the tetrahydrofuran ring with the correct stereochemistry, the terminal alkenes of citreomontanin need to undergo isomerization to yield a (17Z)-hexaene, a step that could be catalyzed by ctvC. The (17Z)-hexaene then undergoes bisepoxidation by ctvC to form a (17R,16R,15S,14R)-bisepoxide moiety. Lastly, ctvD acts as a regioselective hydrolase to form the tetrahydrofuran ring with the substituents in the correct absolute configuration, completing the biosynthesis of citreoviridin. The chain is Methyltransferase ctvB from Aspergillus terreus (strain NIH 2624 / FGSC A1156).